Here is a 497-residue protein sequence, read N- to C-terminus: MTESTDPSTRAGEAGALWGGRFAGGPSPELVALSRSTHFDWQLAPYDIAGSRAHARALASAGYLSDAERQAMLQALDTLEDRVRSGALVASEADEDVHGALERGLMDIAGTELGGKLRAGRSRNDQIATLVRMYLRDHAAVIHAMLVQLVDALAAQAEAAGGAIMPGRTHLQHAQPVLLAHHLLAHCWPLVRDLERLADWDARADVSPYGSGALAGSTLGLDAGAVARDLGFARSSENSIDGTAARDVVAEFAFVLAQVGIDLSRLSEEIILWNTREFGFVTLSDSFSTGSSIMPQKKNPDIAELARGKSGRLIGNLSGLLATLKGLPLAYNRDLQEDKEPVFDSVQTLEVLLPAFTGMIATLRFDTDRMAELAPQGFSLATDVAEWLVKHRVAFRDAHEVTGELVKAAESRGVGLEDLTDDDLRAVSPHLVPEVREVLSIEGSVASRDGAGGTARVRVDEQRAELVRRVAELRARADAAAERRAAAAASASGEASE.

The protein belongs to the lyase 1 family. Argininosuccinate lyase subfamily.

The protein localises to the cytoplasm. It catalyses the reaction 2-(N(omega)-L-arginino)succinate = fumarate + L-arginine. It participates in amino-acid biosynthesis; L-arginine biosynthesis; L-arginine from L-ornithine and carbamoyl phosphate: step 3/3. In Clavibacter michiganensis subsp. michiganensis (strain NCPPB 382), this protein is Argininosuccinate lyase.